The chain runs to 942 residues: Glutamyl aminopeptidase (942 aa).

At 1 to 14 (MSTDSKRYCIKTKH) the chain is on the cytoplasmic side. A helical; Signal-anchor for type II membrane protein membrane pass occupies residues 15-35 (VAIICAAVVAVGLIVGLSVGL). The Extracellular portion of the chain corresponds to 36–942 (TRSCDSKDGG…RDTIRDWFFN (907 aa)). The interval 40 to 74 (DSKDGGQGTTQSPSHLPPTSSPPQDQGVCPASEDE) is disordered. 3 N-linked (GlcNAc...) asparagine glycosylation sites follow: Asn-110, Asn-114, and Asn-187. A substrate-binding site is contributed by Glu-213. The N-linked (GlcNAc...) asparagine glycan is linked to Asn-314. 347-351 (GAMEN) is a substrate binding site. Residue Asn-367 is glycosylated (N-linked (GlcNAc...) asparagine). Zn(2+) is bound at residue His-383. Glu-384 (proton acceptor) is an active-site residue. Positions 387 and 406 each coordinate Zn(2+). N-linked (GlcNAc...) asparagine glycosylation is found at Asn-557, Asn-579, Asn-587, Asn-597, Asn-632, Asn-668, Asn-753, Asn-786, and Asn-791. Residue Arg-877 participates in substrate binding.

The protein belongs to the peptidase M1 family. Homodimer; disulfide-linked. The cofactor is Zn(2+).

It localises to the cell membrane. The enzyme catalyses Release of N-terminal glutamate (and to a lesser extent aspartate) from a peptide.. With respect to regulation, substrate specificity is modulated by calcium which enhances the enzymatic activity for cleavage of acidic residues while reducing its activity with basic residues. Inhibited by aminopeptidase inhibitors amastatin and bestatin. Regulates central hypertension through its calcium-modulated preference to cleave N-terminal acidic residues from peptides such as angiotensin II. The sequence is that of Glutamyl aminopeptidase (ENPEP) from Sus scrofa (Pig).